Here is a 613-residue protein sequence, read N- to C-terminus: Serine/threonine-protein kinase pkpA (613 aa).

Positions 17 to 269 (SKLNTVLGKG…AQEILEHRFL (253 aa)) constitute a Protein kinase domain. ATP is bound by residues 23–31 (LGKGAYKVV) and Lys50. Asp140 (proton acceptor) is an active-site residue. 2 disordered regions span residues 424–475 (LQPQ…STML) and 589–613 (VTQR…QELM). Residues 427–441 (QPQPQPQPQPQPQPQ) show a composition bias toward pro residues. The segment covering 442–475 (PQFQLQPQLQYLSPQSTTSPGPTSDDNSTNSTML) has biased composition (low complexity). Residues 592 to 602 (RGLQGTRSGAS) are compositionally biased toward polar residues.

The protein belongs to the protein kinase superfamily. Ser/Thr protein kinase family.

It catalyses the reaction L-seryl-[protein] + ATP = O-phospho-L-seryl-[protein] + ADP + H(+). The catalysed reaction is L-threonyl-[protein] + ATP = O-phospho-L-threonyl-[protein] + ADP + H(+). Its function is as follows. Serine/threonine protein kinase that probably participates as an intermediate in an intracellular system controlling nuclear proliferation. In Phycomyces blakesleeanus (strain ATCC 8743b / DSM 1359 / FGSC 10004 / NBRC 33097 / NRRL 1555), this protein is Serine/threonine-protein kinase pkpA (pkpA).